Here is a 112-residue protein sequence, read N- to C-terminus: U-scoloptoxin(16)-Er5a (112 aa).

An N-terminal signal peptide occupies residues 1–26 (MNTVSVVQFLAVGCAVFVLYGRGVFA).

This sequence belongs to the scoloptoxin-16 family. Contains 2 disulfide bonds. As to expression, expressed by the venom gland.

It is found in the secreted. The protein is U-scoloptoxin(16)-Er5a of Ethmostigmus rubripes (Giant centipede).